Here is a 286-residue protein sequence, read N- to C-terminus: Small ribosomal subunit protein uS2 (286 aa).

The segment at 213–286 (EEQAQNNKWA…GAQEGGEWGS (74 aa)) is disordered. Over residues 227–241 (SPALSAAVPSSAAPV) the composition is skewed to low complexity. Over residues 244-270 (WSSSPSKETTEWGASNTAAAAKSSWSN) the composition is skewed to polar residues. Positions 274 to 286 (GEWGAQEGGEWGS) are enriched in gly residues.

It belongs to the universal ribosomal protein uS2 family. As to quaternary structure, component of the small ribosomal subunit. Mature ribosomes consist of a small (40S) and a large (60S) subunit. The 40S subunit contains about 33 different proteins and 1 molecule of RNA (18S). The 60S subunit contains about 49 different proteins and 3 molecules of RNA (28S, 5.8S and 5S). Interacts with ribosomal protein S21.

It is found in the cytoplasm. In terms of biological role, required for the assembly and/or stability of the 40S ribosomal subunit. Required for the processing of the 20S rRNA-precursor to mature 18S rRNA in a late step of the maturation of 40S ribosomal subunits. The polypeptide is Small ribosomal subunit protein uS2 (Trichoplax adhaerens (Trichoplax reptans)).